Reading from the N-terminus, the 140-residue chain is 3-hydroxyacyl-[acyl-carrier-protein] dehydratase FabZ (140 aa).

Residue His-48 is part of the active site.

This sequence belongs to the thioester dehydratase family. FabZ subfamily.

It localises to the cytoplasm. It catalyses the reaction a (3R)-hydroxyacyl-[ACP] = a (2E)-enoyl-[ACP] + H2O. Involved in unsaturated fatty acids biosynthesis. Catalyzes the dehydration of short chain beta-hydroxyacyl-ACPs and long chain saturated and unsaturated beta-hydroxyacyl-ACPs. This Caldicellulosiruptor bescii (strain ATCC BAA-1888 / DSM 6725 / KCTC 15123 / Z-1320) (Anaerocellum thermophilum) protein is 3-hydroxyacyl-[acyl-carrier-protein] dehydratase FabZ.